The chain runs to 400 residues: Mu-type opioid receptor (400 aa).

At 1-68 (MDSSAVPANA…CPPTGSPSMI (68 aa)) the chain is on the extracellular side. Residues N9, N12, N33, N40, and N48 are each glycosylated (N-linked (GlcNAc...) asparagine). The helical transmembrane segment at 69 to 93 (TAITIMALYSIVCVVGLFGNFLVMY) threads the bilayer. Residues 94–106 (VIVRYTKMKTATN) lie on the Cytoplasmic side of the membrane. Residues 107 to 131 (IYIFNLALADALATSTLPFQSVNYL) form a helical membrane-spanning segment. The Extracellular segment spans residues 132–142 (MGTWPFGTILC). A disulfide bridge links C142 with C219. A helical membrane pass occupies residues 143–165 (KIVISIDYYNMFTSIFTLCTMSV). The Cytoplasmic portion of the chain corresponds to 166–185 (DRYIAVCHPVKALDFRTPRN). Phosphotyrosine is present on Y168. The chain crosses the membrane as a helical span at residues 186 to 207 (AKIVNVCNWIISSAIGLPVMFM). The Extracellular segment spans residues 208 to 230 (ATTKYRQGSIDCTLTFSHPTWYW). A helical transmembrane segment spans residues 231–255 (ENLLKICVFIFAFIMPVLIITVCYG). Residues 256–279 (LMILRLKSVRMLSGSKEKDRNLRR) are Cytoplasmic-facing. The chain crosses the membrane as a helical span at residues 280-306 (ITRMVLVVVAVFIVCWTPIHIYVIIKA). Residues 307–314 (LVTIPETT) are Extracellular-facing. Residues 315–338 (FQTVSWHFCIALGYTNSCLNPVLY) traverse the membrane as a helical segment. The NPxxY; plays a role in stabilizing the activated conformation of the receptor motif lies at 334-338 (NPVLY). The Cytoplasmic segment spans residues 339 to 400 (AFLDENFKRC…NLEAETAPLP (62 aa)). C353 carries the S-palmitoyl cysteine lipid modification. S365 is modified (phosphoserine). T372 carries the phosphothreonine modification. Residue S377 is modified to Phosphoserine. T396 is modified (phosphothreonine).

This sequence belongs to the G-protein coupled receptor 1 family. Forms homooligomers and heterooligomers with other GPCRs, such as OPRD1, OPRK1, OPRL1, NPFFR2, ADRA2A, SSTR2, CNR1 and CCR5 (probably in dimeric forms). Interacts with heterotrimeric G proteins; interaction with a heterotrimeric complex containing GNAI1, GNB1 and GNG2 stabilizes the active conformation of the receptor and increases its affinity for endomorphin-2, the synthetic opioid peptide DAMGO and for morphinan agonists. Interacts with PPL; the interaction disrupts agonist-mediated G-protein activation. Interacts (via C-terminus) with DNAJB4 (via C-terminus). Interacts with calmodulin; the interaction inhibits the constitutive activity of OPRM1; it abolishes basal and attenuates agonist-stimulated G-protein coupling. Interacts with FLNA, PLD2, RANBP9 and WLS and GPM6A. Interacts with RTP4. Interacts with SYP and GNAS. Interacts with RGS9, RGS17, RGS20, RGS4, PPP1R9B and HINT1. In terms of processing, phosphorylated. Differentially phosphorylated in basal and agonist-induced conditions. Agonist-mediated phosphorylation modulates receptor internalization. Phosphorylated by GRK2 in a agonist-dependent manner. Phosphorylation at Tyr-168 requires receptor activation, is dependent on non-receptor protein tyrosine kinase Src and results in a decrease in agonist efficacy by reducing G-protein coupling efficiency. Phosphorylated on tyrosine residues; the phosphorylation is involved in agonist-induced G-protein-independent receptor down-regulation. Phosphorylation at Ser-377 is involved in G-protein-dependent but not beta-arrestin-dependent activation of the ERK pathway. Post-translationally, ubiquitinated. A basal ubiquitination seems not to be related to degradation. Ubiquitination is increased upon formation of OPRM1:OPRD1 oligomers leading to proteasomal degradation; the ubiquitination is diminished by RTP4.

It localises to the cell membrane. The protein resides in the cell projection. The protein localises to the axon. It is found in the perikaryon. Its subcellular location is the dendrite. It localises to the endosome. In terms of biological role, receptor for endogenous opioids such as beta-endorphin and endomorphin. Receptor for natural and synthetic opioids including morphine, heroin, DAMGO, fentanyl, etorphine, buprenorphin and methadone. Also activated by enkephalin peptides, such as Met-enkephalin or Met-enkephalin-Arg-Phe, with higher affinity for Met-enkephalin-Arg-Phe. Agonist binding to the receptor induces coupling to an inactive GDP-bound heterotrimeric G-protein complex and subsequent exchange of GDP for GTP in the G-protein alpha subunit leading to dissociation of the G-protein complex with the free GTP-bound G-protein alpha and the G-protein beta-gamma dimer activating downstream cellular effectors. The agonist- and cell type-specific activity is predominantly coupled to pertussis toxin-sensitive G(i) and G(o) G alpha proteins, GNAI1, GNAI2, GNAI3 and GNAO1, and to a lesser extent to pertussis toxin-insensitive G alpha proteins GNAZ and GNA15. They mediate an array of downstream cellular responses, including inhibition of adenylate cyclase activity and both N-type and L-type calcium channels, activation of inward rectifying potassium channels, mitogen-activated protein kinase (MAPK), phospholipase C (PLC), phosphoinositide/protein kinase (PKC), phosphoinositide 3-kinase (PI3K) and regulation of NF-kappa-B. Also couples to adenylate cyclase stimulatory G alpha proteins. The selective temporal coupling to G-proteins and subsequent signaling can be regulated by RGSZ proteins, such as RGS9, RGS17 and RGS4. Phosphorylation by members of the GPRK subfamily of Ser/Thr protein kinases and association with beta-arrestins is involved in short-term receptor desensitization. Beta-arrestins associate with the GPRK-phosphorylated receptor and uncouple it from the G-protein thus terminating signal transduction. The phosphorylated receptor is internalized through endocytosis via clathrin-coated pits which involves beta-arrestins. The activation of the ERK pathway occurs either in a G-protein-dependent or a beta-arrestin-dependent manner and is regulated by agonist-specific receptor phosphorylation. Acts as a class A G-protein coupled receptor (GPCR) which dissociates from beta-arrestin at or near the plasma membrane and undergoes rapid recycling. Receptor down-regulation pathways are varying with the agonist and occur dependent or independent of G-protein coupling. Endogenous ligands induce rapid desensitization, endocytosis and recycling. Heterooligomerization with other GPCRs can modulate agonist binding, signaling and trafficking properties. Involved in neurogenesis. In Saimiri boliviensis boliviensis (Bolivian squirrel monkey), this protein is Mu-type opioid receptor (OPRM1).